Here is a 232-residue protein sequence, read N- to C-terminus: Orotidine 5'-phosphate decarboxylase (232 aa).

Substrate is bound by residues Asp-16, Lys-38, 65–74 (DLKLHDIGNT), Thr-119, Arg-180, Gln-189, Gly-209, and Arg-210. The active-site Proton donor is the Lys-67.

Belongs to the OMP decarboxylase family. Type 1 subfamily. Homodimer.

The catalysed reaction is orotidine 5'-phosphate + H(+) = UMP + CO2. The protein operates within pyrimidine metabolism; UMP biosynthesis via de novo pathway; UMP from orotate: step 2/2. Its function is as follows. Catalyzes the decarboxylation of orotidine 5'-monophosphate (OMP) to uridine 5'-monophosphate (UMP). The sequence is that of Orotidine 5'-phosphate decarboxylase from Methylorubrum extorquens (strain PA1) (Methylobacterium extorquens).